The following is a 533-amino-acid chain: MNVQFPWLTVLTLLPLVAAFFIPVLPDREGKTVRWYALAIALLEFGLSAMVFWRHYDAQSAQFQMVETVPWLPQIGLNWSLAVDGLAVPLILLTGLVNTLAIFAAWQVKQKPRLFYFLMLALYSAQIGVFAAQDLILFFLIWELELVPVYLLISIWGGAQRQYAATKFILYTAVGSLFILIAGLGMAFYGGDFSLNMAALGLKNYPLALELLAYAGFLIAFGVKLPIFPLHTWLPDAHGEASAPVSMVLAGVLLKMGGYGLIRFNLQMLPDAHIYFAPVLIALGVVNIIYGALTAFGQENLKRRLAYSSISHMGFVLLGIGALNGIGLNGAMLQMLSHGLIAAVLFFLAGVTYDRTHTLAMEKMSGIAQSMPKTFALFTASSMASLALPGMSGFVSELTVFLGLTNSDAYSTTFKVGVIFLAAVGVIITPVYLLSMVRRVFTGKQAGDMFDKLLLDINPRETFIALSLLVPIIAVGMYPKVATQTYDVTTTAIARHVHGALPAVAQHHLPLYAQLTQSAPRLFRETTVADNSL.

14 helical membrane-spanning segments follow: residues 5–25 (FPWLTVLTLLPLVAAFFIPVL), 33–53 (VRWYALAIALLEFGLSAMVFW), 86–106 (LAVPLILLTGLVNTLAIFAAW), 114–134 (LFYFLMLALYSAQIGVFAAQD), 135–155 (LILFFLIWELELVPVYLLISI), 168–188 (FILYTAVGSLFILIAGLGMAF), 208–228 (ALELLAYAGFLIAFGVKLPIF), 242–262 (SAPVSMVLAGVLLKMGGYGLI), 276–296 (FAPVLIALGVVNIIYGALTAF), 310–330 (ISHMGFVLLGIGALNGIGLNG), 331–351 (AMLQMLSHGLIAAVLFFLAGV), 384–404 (ASLALPGMSGFVSELTVFLGL), 416–436 (VGVIFLAAVGVIITPVYLLSM), and 462–482 (TFIALSLLVPIIAVGMYPKVA).

It belongs to the complex I subunit 4 family.

It localises to the cellular thylakoid membrane. It carries out the reaction a plastoquinone + NADH + (n+1) H(+)(in) = a plastoquinol + NAD(+) + n H(+)(out). The catalysed reaction is a plastoquinone + NADPH + (n+1) H(+)(in) = a plastoquinol + NADP(+) + n H(+)(out). Its function is as follows. NDH-1 shuttles electrons from NAD(P)H, via FMN and iron-sulfur (Fe-S) centers, to quinones in the respiratory chain. The immediate electron acceptor for the enzyme in this species is believed to be plastoquinone. Couples the redox reaction to proton translocation (for every two electrons transferred, four hydrogen ions are translocated across the cytoplasmic membrane), and thus conserves the redox energy in a proton gradient. The sequence is that of NAD(P)H-quinone oxidoreductase chain 4 2 from Thermosynechococcus vestitus (strain NIES-2133 / IAM M-273 / BP-1).